A 312-amino-acid polypeptide reads, in one-letter code: Protoheme IX farnesyltransferase (312 aa).

9 helical membrane-spanning segments follow: residues Val29 to Asn49, Pro50 to Leu70, Ile90 to Phe110, Leu117 to Ile137, Ile150 to Gly170, Leu177 to Phe197, Ala223 to Ala243, Phe246 to Trp266, and Ile292 to Phe312.

This sequence belongs to the UbiA prenyltransferase family. Protoheme IX farnesyltransferase subfamily.

The protein localises to the cell inner membrane. It carries out the reaction heme b + (2E,6E)-farnesyl diphosphate + H2O = Fe(II)-heme o + diphosphate. It participates in porphyrin-containing compound metabolism; heme O biosynthesis; heme O from protoheme: step 1/1. Converts heme B (protoheme IX) to heme O by substitution of the vinyl group on carbon 2 of heme B porphyrin ring with a hydroxyethyl farnesyl side group. The chain is Protoheme IX farnesyltransferase from Brucella melitensis biotype 1 (strain ATCC 23456 / CCUG 17765 / NCTC 10094 / 16M).